The chain runs to 412 residues: Putative competence-damage inducible protein (412 aa).

Belongs to the CinA family.

The sequence is that of Putative competence-damage inducible protein from Clostridium perfringens (strain 13 / Type A).